The chain runs to 385 residues: ATP phosphoribosyltransferase regulatory subunit (385 aa).

This sequence belongs to the class-II aminoacyl-tRNA synthetase family. HisZ subfamily. Heteromultimer composed of HisG and HisZ subunits.

It localises to the cytoplasm. It participates in amino-acid biosynthesis; L-histidine biosynthesis; L-histidine from 5-phospho-alpha-D-ribose 1-diphosphate: step 1/9. In terms of biological role, required for the first step of histidine biosynthesis. May allow the feedback regulation of ATP phosphoribosyltransferase activity by histidine. The chain is ATP phosphoribosyltransferase regulatory subunit from Bordetella petrii (strain ATCC BAA-461 / DSM 12804 / CCUG 43448).